We begin with the raw amino-acid sequence, 303 residues long: 2-dehydropantoate 2-reductase (303 aa).

NADP(+) is bound by residues 7 to 12, arginine 35, asparagine 103, alanine 129, and arginine 131; that span reads GAGSLG. Asparagine 103 lines the substrate pocket. Lysine 182 functions as the Proton donor in the catalytic mechanism. 4 residues coordinate substrate: asparagine 186, asparagine 190, asparagine 200, and serine 250. Residue glutamate 262 coordinates NADP(+).

This sequence belongs to the ketopantoate reductase family.

It localises to the cytoplasm. The catalysed reaction is (R)-pantoate + NADP(+) = 2-dehydropantoate + NADPH + H(+). Its pathway is cofactor biosynthesis; (R)-pantothenate biosynthesis; (R)-pantoate from 3-methyl-2-oxobutanoate: step 2/2. In terms of biological role, catalyzes the NADPH-dependent reduction of ketopantoate into pantoic acid. The sequence is that of 2-dehydropantoate 2-reductase (panE) from Pseudomonas aeruginosa (strain ATCC 15692 / DSM 22644 / CIP 104116 / JCM 14847 / LMG 12228 / 1C / PRS 101 / PAO1).